The sequence spans 426 residues: 3-phosphoshikimate 1-carboxyvinyltransferase (426 aa).

3-phosphoshikimate contacts are provided by Lys-21, Ser-22, and Arg-26. Lys-21 is a phosphoenolpyruvate binding site. Phosphoenolpyruvate-binding residues include Gly-91 and Arg-119. 3-phosphoshikimate contacts are provided by Ser-162, Ser-163, Gln-164, Ser-190, Asp-304, and Lys-331. Gln-164 serves as a coordination point for phosphoenolpyruvate. Asp-304 acts as the Proton acceptor in catalysis. Residues Arg-335, Arg-377, and Lys-403 each contribute to the phosphoenolpyruvate site.

This sequence belongs to the EPSP synthase family. Monomer.

The protein resides in the cytoplasm. The enzyme catalyses 3-phosphoshikimate + phosphoenolpyruvate = 5-O-(1-carboxyvinyl)-3-phosphoshikimate + phosphate. It participates in metabolic intermediate biosynthesis; chorismate biosynthesis; chorismate from D-erythrose 4-phosphate and phosphoenolpyruvate: step 6/7. In terms of biological role, catalyzes the transfer of the enolpyruvyl moiety of phosphoenolpyruvate (PEP) to the 5-hydroxyl of shikimate-3-phosphate (S3P) to produce enolpyruvyl shikimate-3-phosphate and inorganic phosphate. The chain is 3-phosphoshikimate 1-carboxyvinyltransferase from Clostridium kluyveri (strain ATCC 8527 / DSM 555 / NBRC 12016 / NCIMB 10680 / K1).